The primary structure comprises 440 residues: Proline--tRNA ligase (440 aa).

Belongs to the class-II aminoacyl-tRNA synthetase family. ProS type 2 subfamily. In terms of assembly, homodimer.

The protein localises to the cytoplasm. The catalysed reaction is tRNA(Pro) + L-proline + ATP = L-prolyl-tRNA(Pro) + AMP + diphosphate. Its function is as follows. Catalyzes the attachment of proline to tRNA(Pro) in a two-step reaction: proline is first activated by ATP to form Pro-AMP and then transferred to the acceptor end of tRNA(Pro). In Rhizobium etli (strain ATCC 51251 / DSM 11541 / JCM 21823 / NBRC 15573 / CFN 42), this protein is Proline--tRNA ligase.